The following is a 532-amino-acid chain: BEL1-like homeodomain protein 6 (532 aa).

Residues 144–160 form an SR/KY domain region; the sequence is SKYLKAAQQLLDEAVNV. The tract at residues 170 to 203 is disordered; that stretch reads EGDKNNENPQEPNQSTQDSSTNPPADISQSERQE. Residues 176–197 are compositionally biased toward polar residues; it reads ENPQEPNQSTQDSSTNPPADIS. The segment at 200–271 is BELL domain; the sequence is ERQEMQSKLT…SLRDAISGQI (72 aa). The segment at residues 314-376 is a DNA-binding region (homeobox); the sequence is AWRPQRGLPE…NARVRLWKPM (63 aa). A disordered region spans residues 385–434; that stretch reads FTENDSNSSSENTPKMSEIGPVAADDEDRAREFSQDQTKPDHGHGYGEET. The segment covering 412 to 434 has biased composition (basic and acidic residues); sequence DRAREFSQDQTKPDHGHGYGEET.

Belongs to the TALE/BELL homeobox family. May form heterodimeric complexes with TALE/KNOX proteins. Interacts with OFP2, OFP4, and OFP5.

The protein localises to the nucleus. This Arabidopsis thaliana (Mouse-ear cress) protein is BEL1-like homeodomain protein 6 (BLH6).